The following is a 287-amino-acid chain: Phosphatidylserine decarboxylase proenzyme (287 aa).

Catalysis depends on charge relay system; for autoendoproteolytic cleavage activity residues Asp90, His147, and Ser253. The Schiff-base intermediate with substrate; via pyruvic acid; for decarboxylase activity role is filled by Ser253. Ser253 is subject to Pyruvic acid (Ser); by autocatalysis.

This sequence belongs to the phosphatidylserine decarboxylase family. PSD-B subfamily. Prokaryotic type I sub-subfamily. As to quaternary structure, heterodimer of a large membrane-associated beta subunit and a small pyruvoyl-containing alpha subunit. Pyruvate is required as a cofactor. In terms of processing, is synthesized initially as an inactive proenzyme. Formation of the active enzyme involves a self-maturation process in which the active site pyruvoyl group is generated from an internal serine residue via an autocatalytic post-translational modification. Two non-identical subunits are generated from the proenzyme in this reaction, and the pyruvate is formed at the N-terminus of the alpha chain, which is derived from the carboxyl end of the proenzyme. The autoendoproteolytic cleavage occurs by a canonical serine protease mechanism, in which the side chain hydroxyl group of the serine supplies its oxygen atom to form the C-terminus of the beta chain, while the remainder of the serine residue undergoes an oxidative deamination to produce ammonia and the pyruvoyl prosthetic group on the alpha chain. During this reaction, the Ser that is part of the protease active site of the proenzyme becomes the pyruvoyl prosthetic group, which constitutes an essential element of the active site of the mature decarboxylase.

It is found in the cell membrane. It carries out the reaction a 1,2-diacyl-sn-glycero-3-phospho-L-serine + H(+) = a 1,2-diacyl-sn-glycero-3-phosphoethanolamine + CO2. Its pathway is phospholipid metabolism; phosphatidylethanolamine biosynthesis; phosphatidylethanolamine from CDP-diacylglycerol: step 2/2. Its function is as follows. Catalyzes the formation of phosphatidylethanolamine (PtdEtn) from phosphatidylserine (PtdSer). The polypeptide is Phosphatidylserine decarboxylase proenzyme (Aliivibrio salmonicida (strain LFI1238) (Vibrio salmonicida (strain LFI1238))).